A 472-amino-acid chain; its full sequence is 3-isopropylmalate dehydratase large subunit (472 aa).

[4Fe-4S] cluster is bound by residues Cys347, Cys407, and Cys410.

It belongs to the aconitase/IPM isomerase family. LeuC type 1 subfamily. In terms of assembly, heterodimer of LeuC and LeuD. [4Fe-4S] cluster serves as cofactor.

The catalysed reaction is (2R,3S)-3-isopropylmalate = (2S)-2-isopropylmalate. It participates in amino-acid biosynthesis; L-leucine biosynthesis; L-leucine from 3-methyl-2-oxobutanoate: step 2/4. In terms of biological role, catalyzes the isomerization between 2-isopropylmalate and 3-isopropylmalate, via the formation of 2-isopropylmaleate. The sequence is that of 3-isopropylmalate dehydratase large subunit from Opitutus terrae (strain DSM 11246 / JCM 15787 / PB90-1).